The following is a 149-amino-acid chain: MIETLYNLPFHILVPPNIKVRRFSIPMPSPMAVFSVILFSYFLVTGGIIYDVIVEPPSLGATVDEHGHSRPVAFMPYRVNGQYIMEGLASSFLFTVGGLGFIIMDQTHTPGKTNLNRLLLTAMGFIFILVSFFTTWLFMRMKLPSYLQP.

Topologically, residues 1 to 32 (MIETLYNLPFHILVPPNIKVRRFSIPMPSPMA) are cytoplasmic. A helical transmembrane segment spans residues 33-53 (VFSVILFSYFLVTGGIIYDVI). Residues 54 to 83 (VEPPSLGATVDEHGHSRPVAFMPYRVNGQY) are Extracellular-facing. The chain crosses the membrane as a helical span at residues 84-104 (IMEGLASSFLFTVGGLGFIIM). Residues 105-117 (DQTHTPGKTNLNR) are Cytoplasmic-facing. A helical membrane pass occupies residues 118 to 138 (LLLTAMGFIFILVSFFTTWLF). Residues 139 to 149 (MRMKLPSYLQP) lie on the Extracellular side of the membrane.

It belongs to the OSTC family. In terms of assembly, component of the oligosaccharyltransferase (OST) complex.

The protein localises to the membrane. In terms of biological role, subunit of the oligosaccharyl transferase (OST) complex that catalyzes the initial transfer of a defined glycan (Glc(3)Man(9)GlcNAc(2) in eukaryotes) from the lipid carrier dolichol-pyrophosphate to an asparagine residue within an Asn-X-Ser/Thr consensus motif in nascent polypeptide chains, the first step in protein N-glycosylation. N-glycosylation occurs cotranslationally and the complex associates with the Sec61 complex at the channel-forming translocon complex that mediates protein translocation across the endoplasmic reticulum (ER). All subunits are required for a maximal enzyme activity. The polypeptide is Putative oligosaccharyltransferase complex subunit CG9662 (Drosophila melanogaster (Fruit fly)).